The chain runs to 251 residues: Pyrroloquinoline-quinone synthase (251 aa).

Belongs to the PqqC family.

The catalysed reaction is 6-(2-amino-2-carboxyethyl)-7,8-dioxo-1,2,3,4,7,8-hexahydroquinoline-2,4-dicarboxylate + 3 O2 = pyrroloquinoline quinone + 2 H2O2 + 2 H2O + H(+). It participates in cofactor biosynthesis; pyrroloquinoline quinone biosynthesis. Ring cyclization and eight-electron oxidation of 3a-(2-amino-2-carboxyethyl)-4,5-dioxo-4,5,6,7,8,9-hexahydroquinoline-7,9-dicarboxylic-acid to PQQ. This Klebsiella pneumoniae subsp. pneumoniae (strain ATCC 700721 / MGH 78578) protein is Pyrroloquinoline-quinone synthase.